The chain runs to 361 residues: tRNA N6-adenosine threonylcarbamoyltransferase (361 aa).

H110 and H114 together coordinate Fe cation. Residues 132 to 136, D165, G178, D182, and N284 contribute to the substrate site; that span reads LVSGG. Position 312 (D312) interacts with Fe cation.

The protein belongs to the KAE1 / TsaD family. The cofactor is Fe(2+).

Its subcellular location is the cytoplasm. The enzyme catalyses L-threonylcarbamoyladenylate + adenosine(37) in tRNA = N(6)-L-threonylcarbamoyladenosine(37) in tRNA + AMP + H(+). Its function is as follows. Required for the formation of a threonylcarbamoyl group on adenosine at position 37 (t(6)A37) in tRNAs that read codons beginning with adenine. Is involved in the transfer of the threonylcarbamoyl moiety of threonylcarbamoyl-AMP (TC-AMP) to the N6 group of A37, together with TsaE and TsaB. TsaD likely plays a direct catalytic role in this reaction. The polypeptide is tRNA N6-adenosine threonylcarbamoyltransferase (Desulfovibrio desulfuricans (strain ATCC 27774 / DSM 6949 / MB)).